We begin with the raw amino-acid sequence, 67 residues long: Large ribosomal subunit protein bL31 (67 aa).

Zn(2+) is bound by residues cysteine 16, cysteine 18, cysteine 36, and cysteine 39.

The protein belongs to the bacterial ribosomal protein bL31 family. Type A subfamily. Part of the 50S ribosomal subunit. Zn(2+) is required as a cofactor.

In terms of biological role, binds the 23S rRNA. The protein is Large ribosomal subunit protein bL31 of Treponema pallidum (strain Nichols).